Reading from the N-terminus, the 180-residue chain is UPF0227 protein YcfP (180 aa).

Belongs to the UPF0227 family.

The sequence is that of UPF0227 protein YcfP from Salmonella gallinarum (strain 287/91 / NCTC 13346).